A 174-amino-acid chain; its full sequence is Single-stranded DNA-binding protein 1 (174 aa).

Residues V6 to Q111 enclose the SSB domain. Residues W55–F61 mediate DNA binding. The interval M110 to F174 is disordered. A compositionally biased stretch (gly residues) spans G115 to G133. Low complexity predominate over residues Q134–P160. The Important for interaction with partner proteins motif lies at D169–F174.

Homotetramer. Binds PriA via its C-terminus.

In terms of biological role, plays an important role in DNA replication, recombination and repair. Binds to ssDNA and to an array of partner proteins to recruit them to their sites of action during DNA metabolism. Stimulates the ATPase activity of PriA. One tetramer binds to 26 nucleotides (nt) of ssDNA, a 55 nt piece of ssDNA probably binds 2 tetramers. The sequence is that of Single-stranded DNA-binding protein 1 from Klebsiella pneumoniae subsp. pneumoniae (strain ATCC 700721 / MGH 78578).